A 420-amino-acid chain; its full sequence is L-cysteine:1D-myo-inositol 2-amino-2-deoxy-alpha-D-glucopyranoside ligase (420 aa).

A Zn(2+)-binding site is contributed by cysteine 43. Residues 43 to 46 (CGIT), threonine 58, and 81 to 83 (NIT) each bind L-cysteinyl-5'-AMP. The short motif at 45-55 (ITPYDATHLGH) is the 'HIGH' region element. Residues 187-192 (ERGGDP) carry the 'ERGGDP' region motif. L-cysteinyl-5'-AMP is bound at residue tryptophan 227. Cysteine 231 lines the Zn(2+) pocket. 249–251 (GSD) contacts L-cysteinyl-5'-AMP. Residue histidine 256 coordinates Zn(2+). Residue isoleucine 289 participates in L-cysteinyl-5'-AMP binding. The 'KMSKS' region signature appears at 295-299 (KMSKS).

The protein belongs to the class-I aminoacyl-tRNA synthetase family. MshC subfamily. In terms of assembly, monomer. Requires Zn(2+) as cofactor.

The enzyme catalyses 1D-myo-inositol 2-amino-2-deoxy-alpha-D-glucopyranoside + L-cysteine + ATP = 1D-myo-inositol 2-(L-cysteinylamino)-2-deoxy-alpha-D-glucopyranoside + AMP + diphosphate + H(+). Its function is as follows. Catalyzes the ATP-dependent condensation of GlcN-Ins and L-cysteine to form L-Cys-GlcN-Ins. The protein is L-cysteine:1D-myo-inositol 2-amino-2-deoxy-alpha-D-glucopyranoside ligase of Segniliparus rotundus (strain ATCC BAA-972 / CDC 1076 / CIP 108378 / DSM 44985 / JCM 13578).